A 594-amino-acid polypeptide reads, in one-letter code: Arginine--tRNA ligase (594 aa).

Positions 139 to 149 (ANPTGPLHVGH) match the 'HIGH' region motif.

It belongs to the class-I aminoacyl-tRNA synthetase family. In terms of assembly, monomer.

It is found in the cytoplasm. It catalyses the reaction tRNA(Arg) + L-arginine + ATP = L-arginyl-tRNA(Arg) + AMP + diphosphate. The chain is Arginine--tRNA ligase from Burkholderia mallei (strain NCTC 10247).